Consider the following 185-residue polypeptide: Monooxygenase hypC (185 aa).

3 helical membrane passes run 35–55, 75–95, and 106–126; these read TGTF…PVIL, GHIQ…YAAY, and PFAV…VFMA. N-linked (GlcNAc...) asparagine glycosylation occurs at Asn-129. The chain crosses the membrane as a helical span at residues 165 to 185; the sequence is ALFPLSGAVLGLLSTCKIVSF.

Belongs to the anthrone oxygenase family.

Its subcellular location is the membrane. It functions in the pathway mycotoxin biosynthesis. Functionally, monooxygenase; part of the fragmented gene cluster that mediates the biosynthesis of dothistromin (DOTH), a polyketide toxin very similar in structure to the aflatoxin precursor, versicolorin B. The first step of the pathway is the conversion of acetate to norsolorinic acid (NOR) and requires the fatty acid synthase subunits hexA and hexB, as well as the polyketide synthase pksA. PksA combines a hexanoyl starter unit and 7 malonyl-CoA extender units to synthesize the precursor NOR. The hexanoyl starter unit is provided to the acyl-carrier protein (ACP) domain by the fungal fatty acid synthase hexA/hexB. The second step is the conversion of NOR to averantin (AVN) and requires the norsolorinic acid ketoreductase nor1, which catalyzes the dehydration of norsolorinic acid to form (1'S)-averantin. The cytochrome P450 monooxygenase avnA then catalyzes the hydroxylation of AVN to 5'hydroxyaverantin (HAVN). The next step is performed by adhA that transforms HAVN to averufin (AVF). Averufin might then be converted to hydroxyversicolorone by cypX and avfA. Hydroxyversicolorone is further converted versiconal hemiacetal acetate (VHA) by moxY. VHA is then the substrate for the versiconal hemiacetal acetate esterase est1 to yield versiconal (VAL). Versicolorin B synthase vbsA then converts VAL to versicolorin B (VERB) by closing the bisfuran ring. Then, the activity of the versicolorin B desaturase verB leads to versicolorin A (VERA). DotB, a predicted chloroperoxidase, may perform epoxidation of the A-ring of VERA. Alternatively, a cytochrome P450, such as cypX or avnA could catalyze this step. It is also possible that another, uncharacterized, cytochrome P450 enzyme is responsible for this step. Opening of the epoxide could potentially be achieved by the epoxide hydrolase epoA. However, epoA seems not to be required for DOTH biosynthesis, but other epoxide hydrolases may have the ability to complement this hydrolysis. Alternatively, opening of the epoxide ring could be achieved non-enzymatically. The next step is the deoxygenation of ring A to yield the 5,8-dihydroxyanthraquinone which is most likely catalyzed by the NADPH dehydrogenase encoded by ver1. The last stages of DOTH biosynthesis are proposed to involve hydroxylation of the bisfuran. OrdB and norB might have oxidative roles here. An alternative possibility is that cytochrome P450 monoogenases such as avnA and cypX might perform these steps in addition to previously proposed steps. The chain is Monooxygenase hypC from Dothistroma septosporum (strain NZE10 / CBS 128990) (Red band needle blight fungus).